A 147-amino-acid polypeptide reads, in one-letter code: Large ribosomal subunit protein uL15 (147 aa).

Positions 1 to 20 are enriched in basic and acidic residues; the sequence is MTMHLNDLKPADGARTERTR. The disordered stretch occupies residues 1–64; the sequence is MTMHLNDLKP…GGQTPMQRRL (64 aa). Residues 23-33 are compositionally biased toward gly residues; it reads RGIGSGLGKTC. Residues 34–47 are compositionally biased toward basic residues; that stretch reads GRGHKGSFARKGGG.

Belongs to the universal ribosomal protein uL15 family. Part of the 50S ribosomal subunit.

Binds to the 23S rRNA. The chain is Large ribosomal subunit protein uL15 from Xanthomonas campestris pv. campestris (strain 8004).